Reading from the N-terminus, the 184-residue chain is NADH-quinone oxidoreductase subunit B (184 aa).

The [4Fe-4S] cluster site is built by Cys-37, Cys-38, Cys-103, and Cys-132.

Belongs to the complex I 20 kDa subunit family. NDH-1 is composed of 14 different subunits. Subunits NuoB, C, D, E, F, and G constitute the peripheral sector of the complex. [4Fe-4S] cluster serves as cofactor.

The protein resides in the cell membrane. It carries out the reaction a quinone + NADH + 5 H(+)(in) = a quinol + NAD(+) + 4 H(+)(out). In terms of biological role, NDH-1 shuttles electrons from NADH, via FMN and iron-sulfur (Fe-S) centers, to quinones in the respiratory chain. The immediate electron acceptor for the enzyme in this species is believed to be a menaquinone. Couples the redox reaction to proton translocation (for every two electrons transferred, four hydrogen ions are translocated across the cytoplasmic membrane), and thus conserves the redox energy in a proton gradient. This Mycobacteroides abscessus (strain ATCC 19977 / DSM 44196 / CCUG 20993 / CIP 104536 / JCM 13569 / NCTC 13031 / TMC 1543 / L948) (Mycobacterium abscessus) protein is NADH-quinone oxidoreductase subunit B.